Here is a 321-residue protein sequence, read N- to C-terminus: Putative ankyrin repeat domain-containing protein 26-like protein (321 aa).

5 ANK repeats span residues 48–78, 82–111, 115–144, 148–177, and 181–210; these read KHLG…DLDE, KKRT…QLDV, KNRT…DPDL, YGNT…NIES, and DELT…NLTA. 2 disordered regions span residues 222 to 242 and 268 to 321; these read EYKE…GTSN and FNKP…NENI. The span at 229-242 shows a compositional bias: polar residues; that stretch reads PRNPQNSNPEGTSN.

The chain is Putative ankyrin repeat domain-containing protein 26-like protein (ANKRD26P1) from Homo sapiens (Human).